The sequence spans 438 residues: V-type ATP synthase beta chain (438 aa).

The protein belongs to the ATPase alpha/beta chains family.

Its function is as follows. Produces ATP from ADP in the presence of a proton gradient across the membrane. The V-type beta chain is a regulatory subunit. The chain is V-type ATP synthase beta chain (atpB) from Chlamydia muridarum (strain MoPn / Nigg).